A 633-amino-acid polypeptide reads, in one-letter code: DNA mismatch repair protein MutL (633 aa).

It belongs to the DNA mismatch repair MutL/HexB family.

Its function is as follows. This protein is involved in the repair of mismatches in DNA. It is required for dam-dependent methyl-directed DNA mismatch repair. May act as a 'molecular matchmaker', a protein that promotes the formation of a stable complex between two or more DNA-binding proteins in an ATP-dependent manner without itself being part of a final effector complex. In Bacillus pumilus (strain SAFR-032), this protein is DNA mismatch repair protein MutL.